The following is a 353-amino-acid chain: Immune-associated nucleotide-binding protein 8 (353 aa).

The span at 1-10 (MANDQKNSES) shows a compositional bias: polar residues. A disordered region spans residues 1 to 43 (MANDQKNSESFPAKEDHKKDDAAAPAEVDHKDEFSASQPHPVE). Residues 12-34 (PAKEDHKKDDAAAPAEVDHKDEF) are compositionally biased toward basic and acidic residues. The region spanning 40–248 (HPVENIVLVG…YTDEMYHMIK (209 aa)) is the AIG1-type G domain. Residues 49-56 (GRTGNGKS) form a G1 region. GTP contacts are provided by residues 49 to 57 (GRTGNGKSA) and S70. The G2 stretch occupies residues 76 to 80 (GVTME). The tract at residues 98–101 (DTPG) is G3. Residues 168-171 (TGGD) form a G4 region. The G5 stretch occupies residues 207–209 (DNK). N208 provides a ligand contact to GTP. Positions 244–291 (YHMIKEENERHKKEQEELESKGHSEEQLAALMKELQIMNERNLKAMAE) form a coiled coil.

The protein belongs to the TRAFAC class TrmE-Era-EngA-EngB-Septin-like GTPase superfamily. AIG1/Toc34/Toc159-like paraseptin GTPase family. IAN subfamily. Mainly expressed in leaves.

The polypeptide is Immune-associated nucleotide-binding protein 8 (Arabidopsis thaliana (Mouse-ear cress)).